A 65-amino-acid polypeptide reads, in one-letter code: Large ribosomal subunit protein bL35c (65 aa).

Over residues 25–44 the composition is skewed to basic residues; the sequence is HKASKSHLLQKKSSKQRRHL. Residues 25–45 are disordered; it reads HKASKSHLLQKKSSKQRRHLS.

Belongs to the bacterial ribosomal protein bL35 family.

It is found in the plastid. It localises to the chloroplast. This Pyropia yezoensis (Susabi-nori) protein is Large ribosomal subunit protein bL35c.